The chain runs to 563 residues: GTPase Obg (563 aa).

Residues 2 to 168 enclose the Obg domain; it reads SDFVDRVTVH…RDVILELKSI (167 aa). Positions 169 to 349 constitute an OBG-type G domain; that stretch reads ADVALVGFPS…LNFALSALVH (181 aa). Residues 175–182, 200–204, 221–224, 301–304, and 330–332 each bind GTP; these read GFPSAGKS, FTTLV, DVPG, NKID, and STA. The Mg(2+) site is built by Ser182 and Thr202. Residues 383-469 enclose the OCT domain; sequence DEGGSALEFT…ARMVEFDWDP (87 aa). Disordered stretches follow at residues 478 to 509 and 528 to 563; these read LDGS…ERRA and ERKA…ETEE. The segment covering 486–509 has biased composition (basic and acidic residues); that stretch reads RGKDLRLEEQDPRTHRRSNAERRA.

This sequence belongs to the TRAFAC class OBG-HflX-like GTPase superfamily. OBG GTPase family. In terms of assembly, monomer. Mg(2+) serves as cofactor.

Its subcellular location is the cytoplasm. Its function is as follows. An essential GTPase which binds GTP, GDP and possibly (p)ppGpp with moderate affinity, with high nucleotide exchange rates and a fairly low GTP hydrolysis rate. Plays a role in control of the cell cycle, stress response, ribosome biogenesis and in those bacteria that undergo differentiation, in morphogenesis control. The sequence is that of GTPase Obg from Bifidobacterium longum subsp. infantis (strain ATCC 15697 / DSM 20088 / JCM 1222 / NCTC 11817 / S12).